Consider the following 266-residue polypeptide: Protein-ADP-ribose hydrolase (266 aa).

One can recognise a Macro domain in the interval 74 to 265; the sequence is TDLKDLKPIK…LYKEAFNRDA (192 aa). D93, I94, and N107 together coordinate ADP-D-ribose. The Zn(2+) site is built by C113, H118, and C120. C120, I121, D122, S212, T213, G214, and F216 together coordinate ADP-D-ribose.

Belongs to the MacroD-type family. Zn-Macro subfamily. Zn(2+) is required as a cofactor.

It carries out the reaction 4-O-(ADP-D-ribosyl)-L-aspartyl-[protein] + H2O = L-aspartyl-[protein] + ADP-D-ribose + H(+). Functionally, ADP-ribosylhydrolase that specifically reverses the SirTM-mediated mono-ADP-ribosylation at an asparatate residue of GcvH-L, by releasing ADP-ribose from the target protein. May play a role in the regulation of the response to host-induced oxidative stress. In Staphylococcus aureus (strain MRSA252), this protein is Protein-ADP-ribose hydrolase.